Here is a 313-residue protein sequence, read N- to C-terminus: Homeobox protein knotted-1-like 2 (313 aa).

The tract at residues D13–E40 is disordered. A compositionally biased stretch (low complexity) spans P14–S27. The segment covering P28–G38 has biased composition (gly residues). One can recognise an ELK domain in the interval E205–I225. The homeobox; TALE-type DNA-binding region spans L226–N289. The disordered stretch occupies residues R282–W313.

This sequence belongs to the TALE/KNOX homeobox family. Isoform 1 is expressed in roots, leaf blades, leaf sheaths and flowers. Isoform 2 is expressed in leaf blades, leaf sheaths and flowers.

Its subcellular location is the nucleus. This chain is Homeobox protein knotted-1-like 2 (HOS58), found in Oryza sativa subsp. japonica (Rice).